Reading from the N-terminus, the 84-residue chain is Conophysin-R (84 aa).

Intrachain disulfides connect Cys6-Cys46, Cys9-Cys20, Cys14-Cys36, Cys21-Cys26, Cys53-Cys71, Cys65-Cys83, and Cys72-Cys77.

In terms of tissue distribution, expressed by the venom duct.

It is found in the secreted. In terms of biological role, targets vasopressin-oxytocin related receptors. No effect observed when injected into goldfish or into mice. This Conus radiatus (Rayed cone) protein is Conophysin-R.